The chain runs to 146 residues: Anti-sigma F factor (146 aa).

Belongs to the anti-sigma-factor family.

The enzyme catalyses L-seryl-[protein] + ATP = O-phospho-L-seryl-[protein] + ADP + H(+). It carries out the reaction L-threonyl-[protein] + ATP = O-phospho-L-threonyl-[protein] + ADP + H(+). Binds to sigma F and blocks its ability to form an RNA polymerase holoenzyme (E-sigma F). Phosphorylates SpoIIAA on a serine residue. This phosphorylation may enable SpoIIAA to act as an anti-anti-sigma factor that counteracts SpoIIAB and thus releases sigma F from inhibition. In Bacillus subtilis (strain 168), this protein is Anti-sigma F factor (spoIIAB).